The primary structure comprises 623 residues: Chaperone protein DnaK (623 aa).

Position 175 is a phosphothreonine; by autocatalysis (T175). The tract at residues 578 to 623 (ANPEGAPGAGFDPNNMGGANAGNASAGNDKKDDNVVDADFKVEDDK) is disordered. A compositionally biased stretch (low complexity) spans 591–604 (NNMGGANAGNASAG). Residues 605–623 (NDKKDDNVVDADFKVEDDK) show a composition bias toward basic and acidic residues.

This sequence belongs to the heat shock protein 70 family.

Functionally, acts as a chaperone. The chain is Chaperone protein DnaK from Clostridium botulinum (strain 657 / Type Ba4).